Consider the following 307-residue polypeptide: Quinolinate synthase (307 aa).

Histidine 20 and serine 37 together coordinate iminosuccinate. Residue cysteine 82 participates in [4Fe-4S] cluster binding. Residues 108-110 and serine 125 each bind iminosuccinate; that span reads YIN. Cysteine 168 is a binding site for [4Fe-4S] cluster. Iminosuccinate-binding positions include 194–196 and threonine 219; that span reads HPE. Cysteine 264 serves as a coordination point for [4Fe-4S] cluster.

Belongs to the quinolinate synthase family. Type 2 subfamily. The cofactor is [4Fe-4S] cluster.

Its subcellular location is the cytoplasm. It catalyses the reaction iminosuccinate + dihydroxyacetone phosphate = quinolinate + phosphate + 2 H2O + H(+). It functions in the pathway cofactor biosynthesis; NAD(+) biosynthesis; quinolinate from iminoaspartate: step 1/1. In terms of biological role, catalyzes the condensation of iminoaspartate with dihydroxyacetone phosphate to form quinolinate. This Pyrobaculum aerophilum (strain ATCC 51768 / DSM 7523 / JCM 9630 / CIP 104966 / NBRC 100827 / IM2) protein is Quinolinate synthase.